A 331-amino-acid chain; its full sequence is MNKTEKKFLENMHRQKLVANGDAVLLAVSGGPDSMALLHLFASVASVLHCRLGVAHCNFMLRGDASDADESFVRDACAELGIDFHVRRFDTASVSSAWKKSIEETARLLRYDFFGELCREASYTRIATGHHSDDNAETVLFNLFRGAGISGLRGIRVRHGAIIRPLLPFTRREIVAYLEEKRVVWRDDHTNEGIEYDRNFIRNRVIPVIEERFAHKLMPSLQRISEHAGELEEFIDLHISRLLEAHPGLDLAGGKLHVGTMRQLSMFERKEILKRALKLQGLSVGSNVLNRIAGLLDNQAGRSVPAGAGVEVVLHDGFLRFRQTGNPSDHR.

29-34 (SGGPDS) contacts ATP.

It belongs to the tRNA(Ile)-lysidine synthase family.

The protein localises to the cytoplasm. It carries out the reaction cytidine(34) in tRNA(Ile2) + L-lysine + ATP = lysidine(34) in tRNA(Ile2) + AMP + diphosphate + H(+). Functionally, ligates lysine onto the cytidine present at position 34 of the AUA codon-specific tRNA(Ile) that contains the anticodon CAU, in an ATP-dependent manner. Cytidine is converted to lysidine, thus changing the amino acid specificity of the tRNA from methionine to isoleucine. This chain is tRNA(Ile)-lysidine synthase, found in Chlorobaculum tepidum (strain ATCC 49652 / DSM 12025 / NBRC 103806 / TLS) (Chlorobium tepidum).